A 179-amino-acid polypeptide reads, in one-letter code: ATP synthase subunit delta 2 (179 aa).

Belongs to the ATPase delta chain family. As to quaternary structure, F-type ATPases have 2 components, F(1) - the catalytic core - and F(0) - the membrane proton channel. F(1) has five subunits: alpha(3), beta(3), gamma(1), delta(1), epsilon(1). F(0) has three main subunits: a(1), b(2) and c(10-14). The alpha and beta chains form an alternating ring which encloses part of the gamma chain. F(1) is attached to F(0) by a central stalk formed by the gamma and epsilon chains, while a peripheral stalk is formed by the delta and b chains.

Its subcellular location is the cell inner membrane. In terms of biological role, f(1)F(0) ATP synthase produces ATP from ADP in the presence of a proton or sodium gradient. F-type ATPases consist of two structural domains, F(1) containing the extramembraneous catalytic core and F(0) containing the membrane proton channel, linked together by a central stalk and a peripheral stalk. During catalysis, ATP synthesis in the catalytic domain of F(1) is coupled via a rotary mechanism of the central stalk subunits to proton translocation. Functionally, this protein is part of the stalk that links CF(0) to CF(1). It either transmits conformational changes from CF(0) to CF(1) or is implicated in proton conduction. The polypeptide is ATP synthase subunit delta 2 (Syntrophotalea carbinolica (strain DSM 2380 / NBRC 103641 / GraBd1) (Pelobacter carbinolicus)).